Reading from the N-terminus, the 399-residue chain is Bifunctional enzyme IspD/IspF (399 aa).

Residues 1 to 235 form a 2-C-methyl-D-erythritol 4-phosphate cytidylyltransferase region; it reads METWALILAA…MVEQPKTTVP (235 aa). The tract at residues 236-399 is 2-C-methyl-D-erythritol 2,4-cyclodiphosphate synthase; that stretch reads IVGYGYDVHK…IVIVTAIRIS (164 aa). Asp242 and His244 together coordinate a divalent metal cation. 4-CDP-2-C-methyl-D-erythritol 2-phosphate is bound by residues 242-244 and 275-276; these read DVH and HS. Residue His283 participates in a divalent metal cation binding. 4-CDP-2-C-methyl-D-erythritol 2-phosphate is bound by residues 297 to 299, 302 to 306, 373 to 376, and Phe380; these read DIG, FPDSD, and TTEE.

This sequence in the N-terminal section; belongs to the IspD/TarI cytidylyltransferase family. IspD subfamily. It in the C-terminal section; belongs to the IspF family. A divalent metal cation serves as cofactor.

The enzyme catalyses 2-C-methyl-D-erythritol 4-phosphate + CTP + H(+) = 4-CDP-2-C-methyl-D-erythritol + diphosphate. The catalysed reaction is 4-CDP-2-C-methyl-D-erythritol 2-phosphate = 2-C-methyl-D-erythritol 2,4-cyclic diphosphate + CMP. The protein operates within isoprenoid biosynthesis; isopentenyl diphosphate biosynthesis via DXP pathway; isopentenyl diphosphate from 1-deoxy-D-xylulose 5-phosphate: step 2/6. It functions in the pathway isoprenoid biosynthesis; isopentenyl diphosphate biosynthesis via DXP pathway; isopentenyl diphosphate from 1-deoxy-D-xylulose 5-phosphate: step 4/6. Functionally, bifunctional enzyme that catalyzes the formation of 4-diphosphocytidyl-2-C-methyl-D-erythritol from CTP and 2-C-methyl-D-erythritol 4-phosphate (MEP) (IspD), and catalyzes the conversion of 4-diphosphocytidyl-2-C-methyl-D-erythritol 2-phosphate (CDP-ME2P) to 2-C-methyl-D-erythritol 2,4-cyclodiphosphate (ME-CPP) with a corresponding release of cytidine 5-monophosphate (CMP) (IspF). This chain is Bifunctional enzyme IspD/IspF, found in Lawsonia intracellularis (strain PHE/MN1-00).